The sequence spans 443 residues: KH domain-containing, RNA-binding, signal transduction-associated protein 1 (443 aa).

Positions 1 to 95 (MQRRDDPAAR…LLPPSATAAA (95 aa)) are disordered. Ser18 and Ser20 each carry phosphoserine. Lys21 is subject to N6-acetyllysine. Phosphoserine is present on Ser29. Thr33 is modified (phosphothreonine). Arg45 and Arg52 each carry asymmetric dimethylarginine; by PRMT1. A Phosphoserine modification is found at Ser58. Pro residues predominate over residues 61–72 (TQPPPLLPPSNP). Positions 81–95 (SAPTPLLPPSATAAA) are enriched in low complexity. Position 84 is a phosphothreonine; by MAPK1 (Thr84). Residues Lys96 and Lys102 each participate in a glycyl lysine isopeptide (Lys-Gly) (interchain with G-Cter in SUMO2) cross-link. The segment at 100 to 260 (ENKYLPELMA…VKKFLVPDMM (161 aa)) is involved in homodimerization. Ser113 is subject to Phosphoserine. Lys139 is covalently cross-linked (Glycyl lysine isopeptide (Lys-Gly) (interchain with G-Cter in SUMO2)). Ser150 is modified (phosphoserine). The 27-residue stretch at 171–197 (NFVGKILGPQGNTIKRLQEETGAKISV) folds into the KH domain. N6-acetyllysine; alternate is present on Lys175. A Glycyl lysine isopeptide (Lys-Gly) (interchain with G-Cter in SUMO2); alternate cross-link involves residue Lys175. Phosphothreonine is present on Thr183. The segment at 280-317 (PSRGRGVSVRGRGAAPPPPPVPRGRGVGPPRGALVRGT) is disordered. Omega-N-methylarginine occurs at positions 282, 284, and 291. The span at 283-293 (GRGVSVRGRGA) shows a compositional bias: low complexity. An Asymmetric dimethylarginine; by PRMT1 modification is found at Arg304. Low complexity predominate over residues 307–316 (GPPRGALVRG). Arg310 and Arg315 each carry omega-N-methylarginine; by PRMT1. Residue Arg320 is modified to Dimethylated arginine; alternate. At Arg320 the chain carries Omega-N-methylarginine; by PRMT1; alternate. Arg325 carries the omega-N-methylarginine; by PRMT1 modification. Positions 326–345 (GATVTRGVPPPPTVRGAPTP) are disordered. Residues Arg331 and Arg340 each carry the dimethylated arginine; alternate modification. Residues Arg331 and Arg340 each carry the omega-N-methylarginine; by PRMT1; alternate modification. Asymmetric dimethylarginine; alternate is present on Arg331. Residues 351–443 (GIQRIPLPPT…AYREHPYGRY (93 aa)) form an interaction with HNRNPA1 region. Tyr387 carries the post-translational modification Phosphotyrosine. A Phosphoserine modification is found at Ser390. An interaction with ZBTB7A region spans residues 400-420 (GHGELQDSYEAYGQDDWNGTR). The interval 411–443 (YGQDDWNGTRPSLKAPPARPVKGAYREHPYGRY) is disordered. Lys432 is covalently cross-linked (Glycyl lysine isopeptide (Lys-Gly) (interchain with G-Cter in SUMO2)). Residues 434–443 (AYREHPYGRY) show a composition bias toward basic and acidic residues. 3 positions are modified to phosphotyrosine; by PTK6: Tyr435, Tyr440, and Tyr443.

Belongs to the KHDRBS family. As to quaternary structure, self-associates to form homooligomers when bound to RNA, oligomerization appears to be limited when binding to proteins. Interacts with KHDRBS3/SLIM-2. Forms a trimeric complex in the nucleus consisting of BANP, HDAC6 and KHDRBS1/SAM68; HDAC6 keeps KHDRBS1 in a deacetylated state which inhibits the inclusion of CD44 alternate exons. The complex is disrupted by MAPK1/MAPK3-mediated phosphorylation of BANP which results in BANP export to the cytoplasm. This facilitates acetylation of KHDRBS1 and CD44 variant exon inclusion. Interacts with KHDRBS2/SLIM-1; heterooligomer formation of KHDRBS family proteins may modulate RNA substrate specificity. Interacts with PIK3R1, PLCG1. Interacts with RASA1, GRB2, SRC, CBP, PRMT1, APC, HNRNPA1. Interacts with PTK6 (via SH3 and SH2 domains). Forms a complex with ILF2, ILF3, YLPM1, RBMX, NCOA5 and PPP1CA. Binds WBP4/FBP21 (via WW domains), FNBP4/FBP30 (via WW domains). Interacts (via Arg/Gly-rich-flanked Pro-rich regions) with FYN (via the SH3 domain). Interacts with the non-receptor tyrosine kinase SRMS; the interaction leads to phosphorylation of KHDRBS1. Interacts with ZBTB7A; negatively regulates KHDRBS1 splicing activity toward BCL2L1. In terms of processing, tyrosine phosphorylated by several non-receptor tyrosine kinases including LCK, FYN and JAK3. Also tyrosine phosphorylated by the non-receptor tyrosine kinase SRMS in an EGF-dependent manner. Phosphorylation by PTK6 negatively regulates its RNA binding ability. Phosphorylation by PTK6 at Tyr-440 dictates the nuclear localization of KHDRBS1. Post-translationally, acetylated. Positively correlates with ability to bind RNA. Deacetylated by HDAC6; this regulates alternative splicing by inhibiting the inclusion of CD44 alternate exons. Arginine methylation is required for nuclear localization, Inhibits interaction with Src-like SH3 domains, but not interaction with WW domains of WBP4/FBP21 and FNBP4/FBP30.

It is found in the nucleus. Its subcellular location is the cytoplasm. It localises to the membrane. Recruited and tyrosine phosphorylated by several receptor systems, for example the T-cell, leptin and insulin receptors. Once phosphorylated, functions as an adapter protein in signal transduction cascades by binding to SH2 and SH3 domain-containing proteins. Role in G2-M progression in the cell cycle. Represses CBP-dependent transcriptional activation apparently by competing with other nuclear factors for binding to CBP. Also acts as a putative regulator of mRNA stability and/or translation rates and mediates mRNA nuclear export. Positively regulates the association of constitutive transport element (CTE)-containing mRNA with large polyribosomes and translation initiation. May not be involved in the nucleocytoplasmic export of unspliced (CTE)-containing RNA species. RNA-binding protein that plays a role in the regulation of alternative splicing and influences mRNA splice site selection and exon inclusion. Binds to RNA containing 5'-[AU]UAA-3' as a bipartite motif spaced by more than 15 nucleotides. Binds poly(A). Can regulate CD44 alternative splicing in a Ras pathway-dependent manner. In cooperation with HNRNPA1 modulates alternative splicing of BCL2L1 by promoting splicing toward isoform Bcl-X(S), and of SMN1. Can regulate alternative splicing of NRXN1 and NRXN3 in the laminin G-like domain 6 containing the evolutionary conserved neurexin alternative spliced segment 4 (AS4) involved in neurexin selective targeting to postsynaptic partners. In a neuronal activity-dependent manner cooperates synergistically with KHDRBS2/SLIM-1 in regulation of NRXN1 exon skipping at AS4. The cooperation with KHDRBS2/SLIM-1 is antagonistic for regulation of NXRN3 alternative splicing at AS4. The polypeptide is KH domain-containing, RNA-binding, signal transduction-associated protein 1 (Rattus norvegicus (Rat)).